We begin with the raw amino-acid sequence, 123 residues long: Large ribosomal subunit protein bL12 (123 aa).

The protein belongs to the bacterial ribosomal protein bL12 family. Homodimer. Part of the ribosomal stalk of the 50S ribosomal subunit. Forms a multimeric L10(L12)X complex, where L10 forms an elongated spine to which 2 to 4 L12 dimers bind in a sequential fashion. Binds GTP-bound translation factors.

Its function is as follows. Forms part of the ribosomal stalk which helps the ribosome interact with GTP-bound translation factors. Is thus essential for accurate translation. The protein is Large ribosomal subunit protein bL12 of Dechloromonas aromatica (strain RCB).